Reading from the N-terminus, the 182-residue chain is uncharacterized protein (182 aa).

2 helical membrane passes run 29–49 (IISG…AGLP) and 63–83 (FYFP…MLTL).

Its subcellular location is the cell membrane. This is an uncharacterized protein from Ureaplasma parvum serovar 3 (strain ATCC 700970).